Here is a 247-residue protein sequence, read N- to C-terminus: Small ribosomal subunit protein uS2 (247 aa).

It belongs to the universal ribosomal protein uS2 family.

The chain is Small ribosomal subunit protein uS2 from Ralstonia nicotianae (strain ATCC BAA-1114 / GMI1000) (Ralstonia solanacearum).